A 470-amino-acid polypeptide reads, in one-letter code: Putative multidrug resistance protein MdtD (470 aa).

Over 1–11 (MTELPDNTRWQ) the chain is Periplasmic. The chain crosses the membrane as a helical span at residues 12 to 32 (LWIVAFGFFMQSLDTTIVNTA). Residues 33-48 (LPSMAKSLGESPLHMH) are Cytoplasmic-facing. A helical membrane pass occupies residues 49–69 (MVVVSYVLTVAVMLPASGWLA). The Periplasmic portion of the chain corresponds to 70 to 76 (DKIGVRN). A helical transmembrane segment spans residues 77–97 (IFFAAIVLFTLGSLFCALSGT). At 98-101 (LNQL) the chain is on the cytoplasmic side. A helical transmembrane segment spans residues 102–124 (VLARVLQGVGGAMMVPVGRLTVM). At 125–137 (KIVPRTQYMAAMT) the chain is on the periplasmic side. Residues 138 to 158 (FVTLPGQIGPLLGPALGGVLV) form a helical membrane-spanning segment. Over 159-164 (EYASWH) the chain is Cytoplasmic. The helical transmembrane segment at 165-185 (WIFLINIPVGIVGAMATFMLM) threads the bilayer. Topologically, residues 186–196 (PNYTIETRRFD) are periplasmic. A helical transmembrane segment spans residues 197–217 (LPGFLLLAIGMAVLTLALDGS). Residues 218–224 (KSMGISP) are Cytoplasmic-facing. Residues 225 to 245 (WTLAGLAAGGAAAILLYLFHA) form a helical membrane-spanning segment. Residues 246–262 (KKNSGALFSLRLFRTPT) lie on the Periplasmic side of the membrane. The chain crosses the membrane as a helical span at residues 263-283 (FSLGLLGSFAGRIGSGMLPFM). At 284–285 (TP) the chain is on the cytoplasmic side. The helical transmembrane segment at 286–306 (VFLQIGLGFSPFHAGLMMIPM) threads the bilayer. The Periplasmic portion of the chain corresponds to 307–341 (VLGSMGMKRIVVQIVNRFGYRRVLVATTLGLALVS). Residues 342 to 362 (LLFMSVALLGWYYLLPLVLLL) form a helical membrane-spanning segment. Topologically, residues 363–395 (QGMVNSARFSSMNTLTLKDLPDTLASSGNSLLS) are cytoplasmic. The helical transmembrane segment at 396 to 416 (MIMQLSMSIGVTIAGMLLGMF) threads the bilayer. Residues 417-430 (GQQHIGIDSSATHH) lie on the Periplasmic side of the membrane. A helical membrane pass occupies residues 431–451 (VFMYTWLCMAVIIALPAIIFA). Residues 452-470 (RVPNDTQQNMVISRRKRSL) lie on the Cytoplasmic side of the membrane.

This sequence belongs to the major facilitator superfamily. TCR/Tet family.

It localises to the cell inner membrane. This Salmonella dublin (strain CT_02021853) protein is Putative multidrug resistance protein MdtD.